A 769-amino-acid polypeptide reads, in one-letter code: Ligand-dependent nuclear receptor-interacting factor 1 (769 aa).

Glycyl lysine isopeptide (Lys-Gly) (interchain with G-Cter in SUMO2) cross-links involve residues K259 and K279. The span at 378–387 shows a compositional bias: polar residues; it reads QIDQQNSVSP. The tract at residues 378–400 is disordered; sequence QIDQQNSVSPDTPVRKDTLQTVS. S402, S430, and S436 each carry phosphoserine. K446 participates in a covalent cross-link: Glycyl lysine isopeptide (Lys-Gly) (interchain with G-Cter in SUMO2). A Phosphoserine modification is found at S502. A disordered region spans residues 528-562; the sequence is DQEPKIHNEMASTSDKGAQGRNDKKDSQGRSNKAL. Positions 580 to 584 match the PxVxL motif motif; that stretch reads LRVCL. S599 is subject to Phosphoserine. K605 participates in a covalent cross-link: Glycyl lysine isopeptide (Lys-Gly) (interchain with G-Cter in SUMO2). Short sequence motifs (nuclear localization signal) lie at residues 628-631 and 642-645; these read KKRK. A Glycyl lysine isopeptide (Lys-Gly) (interchain with G-Cter in SUMO2) cross-link involves residue K702. The residue at position 732 (T732) is a Phosphothreonine. Positions 740 to 769 form a coiled coil; sequence IRDEKIRRLKQVLREKEAALEEMRKKMHQK.

The protein belongs to the LRIF1 family. Interacts with RARA. Interacts with SMCHD1; leading to recruitment to inactivated chromosome X in females. Interacts (via PxVxL motif) with HP1 (CBX1/HP1-beta, CBX3/HP1-gamma and CBX5/HP1-alpha). Widely expressed, with the highest expression levels in heart, liver and placenta.

It localises to the chromosome. The protein localises to the nucleus matrix. Its function is as follows. Together with SMCHD1, involved in chromosome X inactivation in females by promoting the compaction of heterochromatin. Also able to repress the ligand-induced transcriptional activity of retinoic acid receptor alpha (RARA), possibly through direct recruitment of histone deacetylases. Also required for silencing of the DUX4 locus in somatic cells. The sequence is that of Ligand-dependent nuclear receptor-interacting factor 1 from Homo sapiens (Human).